The following is a 251-amino-acid chain: Small ribosomal subunit protein uS2 (251 aa).

It belongs to the universal ribosomal protein uS2 family.

This chain is Small ribosomal subunit protein uS2, found in Cereibacter sphaeroides (strain ATCC 17029 / ATH 2.4.9) (Rhodobacter sphaeroides).